The following is a 325-amino-acid chain: MKPILLQGHERSITQIKYNREGDLLFTVAKDPIVNVWYSVNGERLGTYMGHTGAVWCVDADWDTKHVLTGSADNSCRLWDCETGKQLALLKTNSAVRTCGFDFGGNIIMFSTDKQMGYQCFVSFFDLRDPSQIDSNEPYMRIPCNDSKITSAVWGPLGECIIAGHEGGELNQYSAKSGEVLVNVKEHSRQINDIQLSRDMTMFVTASKDNTAKLFDSTTLEHQKTFRTERPVNSAALSPNYDHVVLGGGQEAMDVTTTSTRIGKFEARFFHLAFEEEFGRVKGHFGPINSVAFHPDGKSYSSGGEDGYVRIHYFDPQYFEFEFEA.

WD repeat units follow at residues 8 to 47, 50 to 91, 144 to 183, and 186 to 225; these read GHER…RLGT, GHTG…ALLK, CNDS…VLVN, and EHSR…HQKT. Thr-219 is subject to Phosphothreonine. Lys-264 is subject to N6-acetyllysine. Lys-282 participates in a covalent cross-link: Glycyl lysine isopeptide (Lys-Gly) (interchain with G-Cter in ubiquitin). One copy of the WD 5 repeat lies at 283-324; that stretch reads GHFGPINSVAFHPDGKSYSSGGEDGYVRIHYFDPQYFEFEFE. Phosphotyrosine is present on Tyr-308.

Belongs to the eIF-3 subunit I family. In terms of assembly, component of the eukaryotic translation initiation factor 3 (eIF-3) complex, which is composed of 13 subunits: EIF3A, EIF3B, EIF3C, EIF3D, EIF3E, EIF3F, EIF3G, EIF3H, EIF3I, EIF3J, EIF3K, EIF3L and EIF3M. The eIF-3 complex appears to include 3 stable modules: module A is composed of EIF3A, EIF3B, EIF3G and EIF3I; module B is composed of EIF3F, EIF3H, and EIF3M; and module C is composed of EIF3C, EIF3D, EIF3E, EIF3K and EIF3L. EIF3C of module C binds EIF3B of module A and EIF3H of module B, thereby linking the three modules. EIF3J is a labile subunit that binds to the eIF-3 complex via EIF3B. The eIF-3 complex interacts with RPS6KB1 under conditions of nutrient depletion. Mitogenic stimulation leads to binding and activation of a complex composed of MTOR and RPTOR, leading to phosphorylation and release of RPS6KB1 and binding of EIF4B to eIF-3. In terms of processing, phosphorylated by TGF-beta type II receptor.

The protein localises to the cytoplasm. Functionally, component of the eukaryotic translation initiation factor 3 (eIF-3) complex, which is required for several steps in the initiation of protein synthesis. The eIF-3 complex associates with the 40S ribosome and facilitates the recruitment of eIF-1, eIF-1A, eIF-2:GTP:methionyl-tRNAi and eIF-5 to form the 43S pre-initiation complex (43S PIC). The eIF-3 complex stimulates mRNA recruitment to the 43S PIC and scanning of the mRNA for AUG recognition. The eIF-3 complex is also required for disassembly and recycling of post-termination ribosomal complexes and subsequently prevents premature joining of the 40S and 60S ribosomal subunits prior to initiation. The eIF-3 complex specifically targets and initiates translation of a subset of mRNAs involved in cell proliferation, including cell cycling, differentiation and apoptosis, and uses different modes of RNA stem-loop binding to exert either translational activation or repression. The sequence is that of Eukaryotic translation initiation factor 3 subunit I from Bos taurus (Bovine).